An 88-amino-acid chain; its full sequence is FXYD domain-containing ion transport regulator 3 (88 aa).

Residues 1–20 constitute a signal peptide (not cleaved); that stretch reads MQEVVLSLLVLLAGLPTLDA. Over 1-38 the chain is Extracellular; that stretch reads MQEVVLSLLVLLAGLPTLDANDPENKNDPFYYDWYSLR. The helical transmembrane segment at 39 to 59 threads the bilayer; the sequence is VGGLICAGILCALGIIVLMSG. At 60–88 the chain is on the cytoplasmic side; that stretch reads KCKCKFRQKPSHRPGEGPPLITPGSAHNC. The segment at 67–88 is disordered; sequence QKPSHRPGEGPPLITPGSAHNC.

Belongs to the FXYD family. Regulatory subunit of the sodium/potassium-transporting ATPase which is composed of a catalytic alpha subunit, a non-catalytic beta subunit and an additional regulatory subunit. Interacts with catalytic alpha subunit ATP1A1. Also interacts with non-catalytic beta subunit ATP1B1. Interacts with the ATP1A1-ATP1B1, ATP1A2-ATP1B1 and ATP1A3-ATP1B1 NKA isozymes. Post-translationally, glutathionylated. As to expression, expressed at high levels in heart, skeletal muscle and liver with low levels of expression in breast, brain, lung, stomach and colon. In the gastric gland, mainly expressed in the mucus cells forming the upper part of the gland and is absent from the parietal cells.

Its subcellular location is the cell membrane. Its function is as follows. Associates with and regulates the activity of the sodium/potassium-transporting ATPase (NKA) which transports Na(+) out of the cell and K(+) into the cell. Reduces glutathionylation of the NKA beta-1 subunit ATP1B1, thus reversing glutathionylation-mediated inhibition of ATP1B1. Induces a hyperpolarization-activated chloride current when expressed in Xenopus oocytes. This chain is FXYD domain-containing ion transport regulator 3 (Fxyd3), found in Mus musculus (Mouse).